The following is a 227-amino-acid chain: Thymidylate kinase (227 aa).

Position 16–23 (16–23) interacts with ATP; that stretch reads GIDGAGKT.

Belongs to the thymidylate kinase family.

It catalyses the reaction dTMP + ATP = dTDP + ADP. Phosphorylation of dTMP to form dTDP in both de novo and salvage pathways of dTTP synthesis. This chain is Thymidylate kinase, found in Xanthomonas campestris pv. campestris (strain 8004).